The chain runs to 157 residues: Transcription elongation factor GreA (157 aa).

Residues Leu-14–Glu-37 adopt a coiled-coil conformation.

Belongs to the GreA/GreB family.

Its function is as follows. Necessary for efficient RNA polymerase transcription elongation past template-encoded arresting sites. The arresting sites in DNA have the property of trapping a certain fraction of elongating RNA polymerases that pass through, resulting in locked ternary complexes. Cleavage of the nascent transcript by cleavage factors such as GreA or GreB allows the resumption of elongation from the new 3'terminus. GreA releases sequences of 2 to 3 nucleotides. The sequence is that of Transcription elongation factor GreA from Vibrio vulnificus (strain CMCP6).